A 259-amino-acid polypeptide reads, in one-letter code: Deoxyribose-phosphate aldolase (259 aa).

Residue D102 is the Proton donor/acceptor of the active site. The Schiff-base intermediate with acetaldehyde role is filled by K167. K201 serves as the catalytic Proton donor/acceptor.

Belongs to the DeoC/FbaB aldolase family. DeoC type 2 subfamily.

It localises to the cytoplasm. The catalysed reaction is 2-deoxy-D-ribose 5-phosphate = D-glyceraldehyde 3-phosphate + acetaldehyde. The protein operates within carbohydrate degradation; 2-deoxy-D-ribose 1-phosphate degradation; D-glyceraldehyde 3-phosphate and acetaldehyde from 2-deoxy-alpha-D-ribose 1-phosphate: step 2/2. Functionally, catalyzes a reversible aldol reaction between acetaldehyde and D-glyceraldehyde 3-phosphate to generate 2-deoxy-D-ribose 5-phosphate. This Escherichia coli O1:K1 / APEC protein is Deoxyribose-phosphate aldolase.